The following is a 451-amino-acid chain: Probable glycine dehydrogenase (decarboxylating) subunit 1 (451 aa).

Belongs to the GcvP family. N-terminal subunit subfamily. The glycine cleavage system is composed of four proteins: P, T, L and H. In this organism, the P 'protein' is a heterodimer of two subunits.

It catalyses the reaction N(6)-[(R)-lipoyl]-L-lysyl-[glycine-cleavage complex H protein] + glycine + H(+) = N(6)-[(R)-S(8)-aminomethyldihydrolipoyl]-L-lysyl-[glycine-cleavage complex H protein] + CO2. Its function is as follows. The glycine cleavage system catalyzes the degradation of glycine. The P protein binds the alpha-amino group of glycine through its pyridoxal phosphate cofactor; CO(2) is released and the remaining methylamine moiety is then transferred to the lipoamide cofactor of the H protein. The sequence is that of Probable glycine dehydrogenase (decarboxylating) subunit 1 from Staphylococcus aureus (strain MSSA476).